Here is a 303-residue protein sequence, read N- to C-terminus: ATP-dependent Clp protease ATP-binding subunit CLPT3, chloroplastic (303 aa).

The N-terminal 37 residues, 1–37, are a transit peptide targeting the chloroplast; that stretch reads MLLANAPHNGCSRLQQVTLLRASGAKLHRKRALTVVA. Disordered regions lie at residues 185–214 and 278–303; these read ASTE…RDSD and RDDN…DEYE.

This sequence belongs to the ClpA/ClpB family.

It localises to the plastid. The protein localises to the chloroplast. Accessory protein regulating the assembly of the plastid Clp protease system. The sequence is that of ATP-dependent Clp protease ATP-binding subunit CLPT3, chloroplastic from Chlamydomonas reinhardtii (Chlamydomonas smithii).